The following is a 122-amino-acid chain: uncharacterized protein (122 aa).

The protein localises to the mitochondrion. This is an uncharacterized protein from Arabidopsis thaliana (Mouse-ear cress).